The following is a 428-amino-acid chain: MTRSEVLFEQAKKTIPGGVNSPVRAFNGVGGSPLFIEKADGAYIFDADGKKYIDYVGSWGPMILGHNHPKIRQAVLDAVDNGLSFGAPTELEVKMAEKVISMVPSIEQVRMVSSGTEATMSAIRLARGFTNRDNILKFEGCYHGHADCLLVKAGSGALTLGQPSSPGIPEDFAKHTLTATYNDLDSVRAIFEQNPESIACIILEPVAGNMNCIPPVEGFLQGLRTICDEFGALLIIDEVMTGFRVSMSGAQGHYGVTPDLTTLGKVIGGGMPVGAFGGRKDVMQFIAPTGPVYQAGTLSGNPIAMSAGLAQMDALCEPGLYEALADKTKRVAEGFKAAADKHGIPLNITYVGGMFGFFFTEDNTPMTSFAQVTKCNMEHFRHFYHAMLDEGIYLAPSAYEAGFMSMAHGDAEIEYTLAAVDRIFAAMK.

Lys-265 is modified (N6-(pyridoxal phosphate)lysine).

The protein belongs to the class-III pyridoxal-phosphate-dependent aminotransferase family. HemL subfamily. As to quaternary structure, homodimer. Pyridoxal 5'-phosphate serves as cofactor.

It is found in the cytoplasm. The catalysed reaction is (S)-4-amino-5-oxopentanoate = 5-aminolevulinate. Its pathway is porphyrin-containing compound metabolism; protoporphyrin-IX biosynthesis; 5-aminolevulinate from L-glutamyl-tRNA(Glu): step 2/2. This is Glutamate-1-semialdehyde 2,1-aminomutase from Shewanella frigidimarina (strain NCIMB 400).